Reading from the N-terminus, the 144-residue chain is MQLNDLRSAPGARREKLRPGRGIGSGLGKTGGRGHKGQTSRSGGKIAPGFEGGQQPLHRRLPKFGFTSLKALDRAEIRTSELAKVEGDVVTLQALKDANLVNQGVRRVKVMLSGDVGRAVTLKGIAVTKGARAAIEAAGGKIED.

Positions 1 to 58 (MQLNDLRSAPGARREKLRPGRGIGSGLGKTGGRGHKGQTSRSGGKIAPGFEGGQQPLH) are disordered. Positions 21-31 (RGIGSGLGKTG) are enriched in gly residues.

It belongs to the universal ribosomal protein uL15 family. In terms of assembly, part of the 50S ribosomal subunit.

In terms of biological role, binds to the 23S rRNA. This is Large ribosomal subunit protein uL15 from Azotobacter vinelandii (strain DJ / ATCC BAA-1303).